Here is a 183-residue protein sequence, read N- to C-terminus: Adenylate kinase (183 aa).

7–15 is a binding site for ATP; it reads GVAGVGKTT.

It belongs to the archaeal adenylate kinase family.

It is found in the cytoplasm. It catalyses the reaction AMP + ATP = 2 ADP. This chain is Adenylate kinase (adkA), found in Thermoplasma acidophilum (strain ATCC 25905 / DSM 1728 / JCM 9062 / NBRC 15155 / AMRC-C165).